A 406-amino-acid chain; its full sequence is MKTLNETTQQSTRAGRYGKDFGGQYIPETLMTELEKVTKAFNDLKDNPEFKAELNDLLVNYANRPSLLYYAKNMTEDLGGAKIYLKREDLNHTGAHKINNVIGQALLAKHLGKKRLIAETGAGQHGVATATIAALMGMDCEIFMGKEDTDRQKLNVYRMELLGAKVHPVTSGSMVLKDAVNATLQEWASRSDDTFYVLGSAVGPAPFPEMVKHFQSVISTESKQQLQAKETRLPDMVVACVGGGSNAIGSFAAYIDDPSVQLVGVEAAGKGVDTDRTAATIERGSVGIFHGMKSLFMQNEDGQIDPVYSISAGLDYPGVGPEHAALAQEGRAQYVGITDDEAVEAFTYIAKQEGIVAAIESCHAIAYVEKIAPQMAKDQIIICTLSGRGDKDVASIAKYKGVDVDE.

Lys97 is subject to N6-(pyridoxal phosphate)lysine.

The protein belongs to the TrpB family. Tetramer of two alpha and two beta chains. Pyridoxal 5'-phosphate serves as cofactor.

It catalyses the reaction (1S,2R)-1-C-(indol-3-yl)glycerol 3-phosphate + L-serine = D-glyceraldehyde 3-phosphate + L-tryptophan + H2O. It participates in amino-acid biosynthesis; L-tryptophan biosynthesis; L-tryptophan from chorismate: step 5/5. In terms of biological role, the beta subunit is responsible for the synthesis of L-tryptophan from indole and L-serine. The sequence is that of Tryptophan synthase beta chain from Lacticaseibacillus casei (strain BL23) (Lactobacillus casei).